Consider the following 235-residue polypeptide: ATP-dependent Clp protease proteolytic subunit (235 aa).

Catalysis depends on Ser-123, which acts as the Nucleophile. Residue His-148 is part of the active site.

This sequence belongs to the peptidase S14 family. Fourteen ClpP subunits assemble into 2 heptameric rings which stack back to back to give a disk-like structure with a central cavity, resembling the structure of eukaryotic proteasomes.

It localises to the cytoplasm. It carries out the reaction Hydrolysis of proteins to small peptides in the presence of ATP and magnesium. alpha-casein is the usual test substrate. In the absence of ATP, only oligopeptides shorter than five residues are hydrolyzed (such as succinyl-Leu-Tyr-|-NHMec, and Leu-Tyr-Leu-|-Tyr-Trp, in which cleavage of the -Tyr-|-Leu- and -Tyr-|-Trp bonds also occurs).. Cleaves peptides in various proteins in a process that requires ATP hydrolysis. Has a chymotrypsin-like activity. Plays a major role in the degradation of misfolded proteins. This Novosphingobium aromaticivorans (strain ATCC 700278 / DSM 12444 / CCUG 56034 / CIP 105152 / NBRC 16084 / F199) protein is ATP-dependent Clp protease proteolytic subunit.